The primary structure comprises 402 residues: Argininosuccinate synthase (402 aa).

Residues 11–19 (AYSGGLDTS) and Ala39 each bind ATP. L-citrulline contacts are provided by Tyr90 and Ser95. Gly120 lines the ATP pocket. L-aspartate is bound by residues Thr122, Asn126, and Asp127. Residue Asn126 coordinates L-citrulline. 5 residues coordinate L-citrulline: Arg130, Ser179, Ser188, Glu264, and Tyr276.

The protein belongs to the argininosuccinate synthase family. Type 1 subfamily. As to quaternary structure, homotetramer.

The protein resides in the cytoplasm. It catalyses the reaction L-citrulline + L-aspartate + ATP = 2-(N(omega)-L-arginino)succinate + AMP + diphosphate + H(+). It functions in the pathway amino-acid biosynthesis; L-arginine biosynthesis; L-arginine from L-ornithine and carbamoyl phosphate: step 2/3. In Roseiflexus castenholzii (strain DSM 13941 / HLO8), this protein is Argininosuccinate synthase.